The chain runs to 113 residues: uncharacterized protein (113 aa).

2 consecutive transmembrane segments (helical) span residues 1-21 (MLIA…FGTW) and 48-68 (IMLA…ALIV).

The protein to M.tuberculosis Rv0039.

The protein resides in the cell membrane. This is an uncharacterized protein from Mycobacterium leprae (strain TN).